The chain runs to 151 residues: Acidic phospholipase A2 5 (151 aa).

Positions 1–27 (MYPAHLLVLLAVCVSLLGAASIPARPL) are cleaved as a signal peptide. 7 disulfides stabilise this stretch: Cys-38–Cys-104, Cys-54–Cys-151, Cys-56–Cys-72, Cys-71–Cys-132, Cys-78–Cys-125, Cys-88–Cys-118, and Cys-111–Cys-123. Residues Tyr-55, Gly-57, and Gly-59 each coordinate Ca(2+). The active site involves His-75. Ca(2+) is bound at residue Asp-76. Asp-126 is an active-site residue.

This sequence belongs to the phospholipase A2 family. Group I subfamily. D49 sub-subfamily. Ca(2+) serves as cofactor. As to expression, expressed by the venom gland.

It localises to the secreted. The catalysed reaction is a 1,2-diacyl-sn-glycero-3-phosphocholine + H2O = a 1-acyl-sn-glycero-3-phosphocholine + a fatty acid + H(+). In terms of biological role, PLA2 catalyzes the calcium-dependent hydrolysis of the 2-acyl groups in 3-sn-phosphoglycerides. In Tropidechis carinatus (Australian rough-scaled snake), this protein is Acidic phospholipase A2 5.